We begin with the raw amino-acid sequence, 417 residues long: UDP-N-acetylglucosamine 1-carboxyvinyltransferase (417 aa).

Phosphoenolpyruvate is bound at residue 22–23; that stretch reads KN. UDP-N-acetyl-alpha-D-glucosamine is bound at residue arginine 92. Catalysis depends on cysteine 116, which acts as the Proton donor. The residue at position 116 (cysteine 116) is a 2-(S-cysteinyl)pyruvic acid O-phosphothioketal. UDP-N-acetyl-alpha-D-glucosamine is bound by residues aspartate 304 and isoleucine 326.

The protein belongs to the EPSP synthase family. MurA subfamily.

The protein resides in the cytoplasm. It carries out the reaction phosphoenolpyruvate + UDP-N-acetyl-alpha-D-glucosamine = UDP-N-acetyl-3-O-(1-carboxyvinyl)-alpha-D-glucosamine + phosphate. It participates in cell wall biogenesis; peptidoglycan biosynthesis. Its function is as follows. Cell wall formation. Adds enolpyruvyl to UDP-N-acetylglucosamine. In Geobacter metallireducens (strain ATCC 53774 / DSM 7210 / GS-15), this protein is UDP-N-acetylglucosamine 1-carboxyvinyltransferase.